Here is a 1085-residue protein sequence, read N- to C-terminus: DNA-directed RNA polymerase subunit beta (1085 aa).

Belongs to the RNA polymerase beta chain family. In terms of assembly, in plastids the minimal PEP RNA polymerase catalytic core is composed of four subunits: alpha, beta, beta', and beta''. When a (nuclear-encoded) sigma factor is associated with the core the holoenzyme is formed, which can initiate transcription.

The protein localises to the plastid. Its subcellular location is the chloroplast. It catalyses the reaction RNA(n) + a ribonucleoside 5'-triphosphate = RNA(n+1) + diphosphate. In terms of biological role, DNA-dependent RNA polymerase catalyzes the transcription of DNA into RNA using the four ribonucleoside triphosphates as substrates. This is DNA-directed RNA polymerase subunit beta from Physcomitrium patens (Spreading-leaved earth moss).